The chain runs to 404 residues: Glucose-1-phosphate adenylyltransferase 2 (404 aa).

Residues Y97, G162, 177–178 (EK), and S195 each bind alpha-D-glucose 1-phosphate.

This sequence belongs to the bacterial/plant glucose-1-phosphate adenylyltransferase family. In terms of assembly, homotetramer.

The enzyme catalyses alpha-D-glucose 1-phosphate + ATP + H(+) = ADP-alpha-D-glucose + diphosphate. The protein operates within glycan biosynthesis; glycogen biosynthesis. In terms of biological role, involved in the biosynthesis of ADP-glucose, a building block required for the elongation reactions to produce glycogen. Catalyzes the reaction between ATP and alpha-D-glucose 1-phosphate (G1P) to produce pyrophosphate and ADP-Glc. In Vibrio vulnificus (strain YJ016), this protein is Glucose-1-phosphate adenylyltransferase 2.